Consider the following 239-residue polypeptide: uncharacterized protein (239 aa).

An N-terminal signal peptide occupies residues 1–23 (MKTMVAMLLAAVGVAVSASSTLA). A compositionally biased stretch (basic and acidic residues) spans 220–230 (AHPKQTLRDQR). The tract at residues 220–239 (AHPKQTLRDQRPAGGDEITK) is disordered.

This is an uncharacterized protein from Sinorhizobium fredii (strain NBRC 101917 / NGR234).